Reading from the N-terminus, the 360-residue chain is 3-dehydroquinate synthase (360 aa).

NAD(+) contacts are provided by residues 71–76 (DGEQFK), 105–109 (GVIGD), 129–130 (TT), Lys142, Lys151, and 169–172 (FLKT). Zn(2+)-binding residues include Glu184, His247, and His264.

This sequence belongs to the sugar phosphate cyclases superfamily. Dehydroquinate synthase family. NAD(+) is required as a cofactor. Requires Co(2+) as cofactor. It depends on Zn(2+) as a cofactor.

The protein localises to the cytoplasm. It carries out the reaction 7-phospho-2-dehydro-3-deoxy-D-arabino-heptonate = 3-dehydroquinate + phosphate. It participates in metabolic intermediate biosynthesis; chorismate biosynthesis; chorismate from D-erythrose 4-phosphate and phosphoenolpyruvate: step 2/7. In terms of biological role, catalyzes the conversion of 3-deoxy-D-arabino-heptulosonate 7-phosphate (DAHP) to dehydroquinate (DHQ). This chain is 3-dehydroquinate synthase, found in Buchnera aphidicola subsp. Schizaphis graminum (strain Sg).